The following is a 256-amino-acid chain: BI1-like protein (256 aa).

A run of 7 helical transmembrane segments spans residues 53 to 73 (VYGI…VVVL), 85 to 105 (PGIL…LHIY), 113 to 133 (LILL…SCAM), 138 to 158 (IVLQ…AYTF), 167 to 187 (FSFL…TSFI), 189 to 209 (MFFP…ALVF), and 228 to 248 (EYIL…LTIL).

This sequence belongs to the BI1 family.

The protein localises to the membrane. In Arabidopsis thaliana (Mouse-ear cress), this protein is BI1-like protein.